The following is a 174-amino-acid chain: Large ribosomal subunit protein uL22 (174 aa).

The protein belongs to the universal ribosomal protein uL22 family. In terms of assembly, part of the 50S ribosomal subunit.

In terms of biological role, this protein binds specifically to 23S rRNA. It makes multiple contacts with different domains of the 23S rRNA in the assembled 50S subunit and ribosome. The globular domain of the protein is located near the polypeptide exit tunnel on the outside of the subunit, while an extended beta-hairpin is found that lines the wall of the exit tunnel in the center of the 70S ribosome. This is Large ribosomal subunit protein uL22 from Nanoarchaeum equitans (strain Kin4-M).